The primary structure comprises 227 residues: MAYPFELGFQDATSPIMEELLHFHDHTLMIVFLISSLVLYIISLMLTTKLTHTSTMDAQEVETIWTILPAIILILIALPSLRVLYMMDEINDPSLTVKTMGHQWYWSYEYTDYEDLNFDSYMIPTSELKPGELRLLEVDNRVVLPMELPIRMLISSEDVLHSWAVPSLGLKTDAIPGRLNQATLTSTRPGLYYGQCSEICGSNHSFMPIVLEMVPLKHFENWSSSML.

Over 1–14 the chain is Mitochondrial intermembrane; that stretch reads MAYPFELGFQDATS. The chain crosses the membrane as a helical span at residues 15–45; it reads PIMEELLHFHDHTLMIVFLISSLVLYIISLM. The Mitochondrial matrix portion of the chain corresponds to 46–59; that stretch reads LTTKLTHTSTMDAQ. The helical transmembrane segment at 60–87 threads the bilayer; the sequence is EVETIWTILPAIILILIALPSLRVLYMM. Topologically, residues 88–227 are mitochondrial intermembrane; it reads DEINDPSLTV…HFENWSSSML (140 aa). Residues His-161, Cys-196, Glu-198, Cys-200, His-204, and Met-207 each contribute to the Cu cation site. Glu-198 serves as a coordination point for Mg(2+).

The protein belongs to the cytochrome c oxidase subunit 2 family. Component of the cytochrome c oxidase (complex IV, CIV), a multisubunit enzyme composed of 14 subunits. The complex is composed of a catalytic core of 3 subunits MT-CO1, MT-CO2 and MT-CO3, encoded in the mitochondrial DNA, and 11 supernumerary subunits COX4I, COX5A, COX5B, COX6A, COX6B, COX6C, COX7A, COX7B, COX7C, COX8 and NDUFA4, which are encoded in the nuclear genome. The complex exists as a monomer or a dimer and forms supercomplexes (SCs) in the inner mitochondrial membrane with NADH-ubiquinone oxidoreductase (complex I, CI) and ubiquinol-cytochrome c oxidoreductase (cytochrome b-c1 complex, complex III, CIII), resulting in different assemblies (supercomplex SCI(1)III(2)IV(1) and megacomplex MCI(2)III(2)IV(2)). Found in a complex with TMEM177, COA6, COX18, COX20, SCO1 and SCO2. Interacts with TMEM177 in a COX20-dependent manner. Interacts with COX20. Interacts with COX16. Cu cation serves as cofactor.

It is found in the mitochondrion inner membrane. The catalysed reaction is 4 Fe(II)-[cytochrome c] + O2 + 8 H(+)(in) = 4 Fe(III)-[cytochrome c] + 2 H2O + 4 H(+)(out). In terms of biological role, component of the cytochrome c oxidase, the last enzyme in the mitochondrial electron transport chain which drives oxidative phosphorylation. The respiratory chain contains 3 multisubunit complexes succinate dehydrogenase (complex II, CII), ubiquinol-cytochrome c oxidoreductase (cytochrome b-c1 complex, complex III, CIII) and cytochrome c oxidase (complex IV, CIV), that cooperate to transfer electrons derived from NADH and succinate to molecular oxygen, creating an electrochemical gradient over the inner membrane that drives transmembrane transport and the ATP synthase. Cytochrome c oxidase is the component of the respiratory chain that catalyzes the reduction of oxygen to water. Electrons originating from reduced cytochrome c in the intermembrane space (IMS) are transferred via the dinuclear copper A center (CU(A)) of subunit 2 and heme A of subunit 1 to the active site in subunit 1, a binuclear center (BNC) formed by heme A3 and copper B (CU(B)). The BNC reduces molecular oxygen to 2 water molecules using 4 electrons from cytochrome c in the IMS and 4 protons from the mitochondrial matrix. The polypeptide is Cytochrome c oxidase subunit 2 (MT-CO2) (Sciurus carolinensis (Eastern gray squirrel)).